The chain runs to 87 residues: Small ribosomal subunit protein bS20 (87 aa).

The disordered stretch occupies residues 1 to 22 (MANHKSALKRHKQSLKRAARNR).

This sequence belongs to the bacterial ribosomal protein bS20 family.

Its function is as follows. Binds directly to 16S ribosomal RNA. The protein is Small ribosomal subunit protein bS20 of Nitratidesulfovibrio vulgaris (strain DP4) (Desulfovibrio vulgaris).